A 549-amino-acid polypeptide reads, in one-letter code: Zinc finger protein 18 (549 aa).

The SCAN box domain maps to 41-123 (RQLFRQFRYQ…TLVESLKGDP (83 aa)). Positions 211–283 (DLGASLLPAA…YLHVNEKIPR (73 aa)) constitute a KRAB domain. 5 consecutive C2H2-type zinc fingers follow at residues 408 to 430 (PTCR…QRTH), 436 to 458 (FQCT…QRTH), 464 to 486 (CKCD…EKIH), 492 to 514 (YKCP…QRVH), and 520 to 542 (YKCS…QRSH).

It belongs to the krueppel C2H2-type zinc-finger protein family.

Its subcellular location is the nucleus. Its function is as follows. May be involved in transcriptional regulation. In Homo sapiens (Human), this protein is Zinc finger protein 18 (ZNF18).